The primary structure comprises 422 residues: CinA-like protein (422 aa).

Belongs to the CinA family.

This chain is CinA-like protein, found in Mycolicibacterium gilvum (strain PYR-GCK) (Mycobacterium gilvum (strain PYR-GCK)).